Consider the following 180-residue polypeptide: ATP-dependent protease subunit HslV (180 aa).

Thr5 is an active-site residue. Na(+) contacts are provided by Gly161, Cys164, and Thr167.

It belongs to the peptidase T1B family. HslV subfamily. A double ring-shaped homohexamer of HslV is capped on each side by a ring-shaped HslU homohexamer. The assembly of the HslU/HslV complex is dependent on binding of ATP.

It is found in the cytoplasm. It carries out the reaction ATP-dependent cleavage of peptide bonds with broad specificity.. Its activity is regulated as follows. Allosterically activated by HslU binding. Functionally, protease subunit of a proteasome-like degradation complex believed to be a general protein degrading machinery. This chain is ATP-dependent protease subunit HslV, found in Campylobacter fetus subsp. fetus (strain 82-40).